Consider the following 147-residue polypeptide: 3-dehydroquinate dehydratase (147 aa).

The active-site Proton acceptor is tyrosine 22. 3 residues coordinate substrate: asparagine 76, histidine 82, and aspartate 89. Residue histidine 102 is the Proton donor of the active site. Substrate is bound by residues 103–104 and arginine 113; that span reads IS.

This sequence belongs to the type-II 3-dehydroquinase family. As to quaternary structure, homododecamer.

It carries out the reaction 3-dehydroquinate = 3-dehydroshikimate + H2O. It participates in metabolic intermediate biosynthesis; chorismate biosynthesis; chorismate from D-erythrose 4-phosphate and phosphoenolpyruvate: step 3/7. Catalyzes a trans-dehydration via an enolate intermediate. This is 3-dehydroquinate dehydratase from Fusobacterium nucleatum subsp. nucleatum (strain ATCC 25586 / DSM 15643 / BCRC 10681 / CIP 101130 / JCM 8532 / KCTC 2640 / LMG 13131 / VPI 4355).